The chain runs to 271 residues: Probable L,D-transpeptidase 3 (271 aa).

Positions valine 127 to glutamine 270 constitute a L,D-TPase catalytic domain. Residue histidine 228 is the Proton donor/acceptor of the active site. The active-site Nucleophile is cysteine 246.

It participates in cell wall biogenesis; peptidoglycan biosynthesis. With respect to regulation, is irreversibly inactivated by the beta-lactam carbapenems via the formation of a covalent adduct resulting from acylation of the catalytic Cys. Imipenem is the most efficient drug for in vitro LdtMt3/Rv1433 inactivation. Its function is as follows. Probable L,D-transpeptidase that may perform as-yet-unknown cross-linking reactions in M.tuberculosis. Is not able to generate 3-&gt;3 cross-links in peptidoglycan, using tetrapeptide stems as acyl donor substrates. May function in the anchoring of proteins to peptidoglycan. The polypeptide is Probable L,D-transpeptidase 3 (Mycobacterium tuberculosis (strain ATCC 25618 / H37Rv)).